The chain runs to 2213 residues: Sortilin-related receptor (2213 aa).

A signal peptide spans 1-28 (MATRSSRRESRLPFLFTLVALLPPGALC). Residues 29–81 (EVWTRTLHGGRAPLPQERGFRVVQGDPRELRLWERGDARGASRADEKPLRRRR) constitute a propeptide, removed in mature form. The Cell attachment site signature appears at 63 to 65 (RGD). Residues 82–2136 (SAALQPEPIK…MQAARSTDVA (2055 aa)) are Lumenal-facing. The N-linked (GlcNAc...) asparagine glycan is linked to Asn99. Ser114 bears the Phosphoserine mark. One copy of the BNR 1 repeat lies at 136 to 147 (YVSYDYGKSFNK). Residue Asn158 is glycosylated (N-linked (GlcNAc...) asparagine). The BNR 2 repeat unit spans residues 232–243 (WKSDDFGQTWIM). Residues Asn368 and Asn430 are each glycosylated (N-linked (GlcNAc...) asparagine). BNR repeat units lie at residues 441–452 (VITFDKGGTWEF), 521–532 (YISSSAGARWRE), and 562–573 (KYSTNEGETWKA). N-linked (GlcNAc...) asparagine glycans are attached at residues Asn616, Asn674, Asn817, and Asn870. LDL-receptor class B repeat units lie at residues 799–842 (NCLY…EPLS), 843–886 (QLLY…VPQE), 887–929 (GIMF…SVDD), 930–971 (QWIY…FKNE), and 972–1012 (IYWD…FYKG). One can recognise an EGF-like domain in the interval 1025–1071 (CSLLCLPRANNSKSCRCPDGVASSVLPSGDLMCDCPKGYELKNNTCV). Asn1034 and Asn1067 each carry an N-linked (GlcNAc...) asparagine glycan. LDL-receptor class A domains are found at residues 1075–1113 (DTCLRNQYRCSNGNCINSIWWCDFDNDCGDMSDEKNCPT), 1114–1154 (TICD…HCEM), 1155–1193 (HQCRSDEYNCSSGMCIRSSWVCDGDNDCRDWSDEANCTA), 1196–1235 (HTCEASNFQCRNGHCIPQRWACDGDADCQDGSDEDPANCE), 1237–1271 (KCNGFRCPNGTCIPSTKHCDGLHDCSDGSDEQHCE), 1272–1316 (PLCT…GCSR), 1322–1360 (KVCDEFGFQCQNGVCISLIWKCDGMDDCGDYSDEANCEN), 1365–1404 (PNCSRYFQFRCDNGHCIPNRWKCDRENDCGDWSDEKDCGD), and 1416–1454 (STCLPNYYRCGGGACVIDTWVCDGYRDCADGSDEEACPS). 21 disulfides stabilise this stretch: Cys1077–Cys1089, Cys1084–Cys1102, Cys1096–Cys1111, Cys1116–Cys1130, Cys1124–Cys1143, Cys1137–Cys1152, Cys1157–Cys1169, Cys1164–Cys1182, Cys1176–Cys1191, Cys1198–Cys1210, Cys1205–Cys1223, Cys1217–Cys1234, Cys1238–Cys1248, Cys1243–Cys1261, Cys1255–Cys1270, Cys1274–Cys1288, Cys1282–Cys1301, Cys1295–Cys1314, Cys1324–Cys1336, Cys1331–Cys1349, and Cys1343–Cys1358. The N-linked (GlcNAc...) asparagine glycan is linked to Asn1163. N-linked (GlcNAc...) asparagine glycosylation occurs at Asn1190. An N-linked (GlcNAc...) asparagine glycan is attached at Asn1245. The N-linked (GlcNAc...) asparagine glycan is linked to Asn1366. 6 cysteine pairs are disulfide-bonded: Cys1367–Cys1380, Cys1375–Cys1393, Cys1387–Cys1402, Cys1418–Cys1430, Cys1425–Cys1443, and Cys1437–Cys1452. The N-linked (GlcNAc...) asparagine glycan is linked to Asn1457. 2 LDL-receptor class A domains span residues 1468–1507 (GRCDRFEFECHQPKKCIPNWRRCDGHQDCQDGQDEANCPT) and 1511–1550 (LTCMSWEFKCEDGEACIVLSERCDGFLDCSDESDEKACSD). 6 cysteine pairs are disulfide-bonded: Cys1470–Cys1483, Cys1477–Cys1496, Cys1490–Cys1505, Cys1513–Cys1526, Cys1520–Cys1539, and Cys1533–Cys1548. Fibronectin type-III domains lie at 1556–1648 (KVQN…TPEG), 1652–1744 (APQN…TVKG), 1748–1843 (PPPN…VRPP), 1842–1926 (PPAP…VVKM), 1933–2028 (PPRH…APDA), and 2029–2117 (LKII…LYDE). Asn1569, Asn1607, Asn1705, Asn1732, Asn1808, Asn1853, Asn1893, Asn1985, Asn2009, Asn2053, Asn2068, Asn2075, and Asn2091 each carry an N-linked (GlcNAc...) asparagine glycan. A helical membrane pass occupies residues 2137-2157 (AVVVPILFLILLSLGVGFAIL). Topologically, residues 2158–2213 (YTKHRRLQSSFTAFANSHYSSRLGSAIFSSGDDLGEDDEDAPMITGFSDDVPMVIA) are cytoplasmic. The Potential nuclear localization signal for the C-terminal fragment generated by PSEN1 motif lies at 2160 to 2163 (KHRR). The Endocytosis signal signature appears at 2171 to 2176 (FANSHY). Positions 2189 to 2213 (DDLGEDDEDAPMITGFSDDVPMVIA) are required for efficient Golgi apparatus - endosome sorting. The segment at 2200–2213 (MITGFSDDVPMVIA) is required for interaction with GGA1 and GGA2. Phosphoserine; by ROCK2 is present on Ser2205. The DXXLL motif involved in the interaction with GGA1 motif lies at 2207–2211 (DVPMV).

This sequence belongs to the VPS10-related sortilin family. SORL1 subfamily. After maturation cleavage, interacts (via N-terminus) with its own propeptide; this interaction prevents interaction with other ligands, including CRLF1, GDNF, GFRA1, IL6 and IL6R. Interacts (via N-terminal ectodomain) with APP, forming a 1:1 stoichiometric complex; this interaction retains APP in the trans-Golgi network and reduces processing into soluble APP-alpha and amyloid-beta peptides. Also interacts with APP C-terminal fragment C99 and with Abeta40. Interacts with beta-secretase BACE1/BACE; this interaction may affect BACE1-binding to APP and hence reduce BACE1-dependent APP cleavage. Interacts with LRPAP1/RAP. Interacts (via C-terminal cytosolic domain) with GGA1 and GGA2 (via N-terminal VHS domain). Interacts with PACS1. May interact (via the N-terminal ectodomain) with the morphogenetic neuropeptide, also called head activator or HA; this interaction is impaired in the presence of propeptide. Interacts with neurotensin/NTS. Interacts (via the N-terminal ectodomain) with PDGFB homodimer. Interacts (via N-terminal ectodomain) with the uPA receptor PLAUR. Interacts with uPA/PLAU and PAI1/SERPINE1, either individually or in complex with each other, leading to endocytosis. Also interacts with PAI1/SERPINE1 in complex with tPA/PLAT. Interacts (via C-terminus) with AP-1 and AP-2 complexes. Interacts with BMPR1A and BMPR1B. Interacts with lipoprotein lipase LPL; this interaction is optimal in slightly acidic conditions. Interacts (via N-terminal ectodomain) with GDNF (via propeptide) and GDNF receptor alpha-1/GFRA1, either individually or in complex with each other. The interaction with GDNF occurs mostly intracellularly. Also interacts with other GDNF receptor alpha family members, including GFRA2, GFRA3 and GFRA4. Interacts with the insulin receptor INSR; this interaction strongly increases the surface exposure of INSR. Interacts (via cytosolic C-terminus) with STK39/SPAK. Interacts (via N-terminal ectodomain) with the heterodimeric complex CRLF1-CLC; within this complex, the interaction is mediated predominantly by the CRLF1 moiety. Interacts with CNTFR, as well as with the tripartite signaling complex formed by CRLF1, CLC and CNTFR. Interacts (via N-terminal ectodomain) with IL6; this interaction leads to IL6 internalization and lysosomal degradation. Binding of SOLRL1 secreted N-terminal ectodomain to IL6 may increase IL6 trans signaling. Interacts with secreted IL6R; this interaction leads to IL6R internalization. Also interacts with transmembrane IL6R; this interaction does not affect subcellular location. Interacts with APOE. Interacts with apolipoprotein E-rich beta-VLDL. Interacts with APOA5; this interaction leads to APOA5 internalization and is abolished by heparin. Interaction with APOA5 results in enhanced binding to chylomicrons. Interacts with ROCK2. Interacts (via cytosolic C-terminus) with PPP3CB/calcineurin A beta. Interacts with NTRK2/TRKB; this interaction facilitates NTRK2 trafficking between synaptic plasma membranes, postsynaptic densities and cell soma, hence positively regulates BDNF signaling. Interacts (via cytosolic C-terminus) with HSPA12A in an ADP-dependent manner; this interaction affects SORL1 internalization and subcellular localization. Interacts (via N-terminal ectodomain) with ERBB2/HER2. Post-translationally, within the Golgi apparatus, the propeptide may be cleaved off by FURIN or a furin-like protease. After cleavage, the propeptide interacts with the mature protein N-terminus, preventing the association with other ligands. At the cell surface, partially subjected to proteolytic shedding that releases the ectodomain in the extracellular milieu. The shedding may be catalyzed by ADAM17/TACE. Following shedding, PSEN1/presenilin-1 cleaves the remaining transmembrane fragment and catalyzes the release of a C-terminal fragment in the cytosol and of a soluble N-terminal beta fragment in the extracellular milieu. The C-terminal cytosolic fragment localizes to the nucleus. Phosphorylation at Ser-2205 facilitates the interaction with GGA1. As to expression, expressed in brain, in particular the hippocampus, dentate gyrus, and cerebral cortex (at protein level). Also detected in liver, adrenal glands, pancreas and testis. Expressed in smooth muscle cells, predominantly during proliferation.

The protein localises to the golgi apparatus membrane. The protein resides in the golgi apparatus. It localises to the trans-Golgi network membrane. Its subcellular location is the endosome membrane. It is found in the early endosome membrane. The protein localises to the recycling endosome membrane. The protein resides in the endoplasmic reticulum membrane. It localises to the endosome. Its subcellular location is the multivesicular body membrane. It is found in the cell membrane. The protein localises to the cytoplasmic vesicle. The protein resides in the secretory vesicle membrane. It localises to the secreted. Its function is as follows. Sorting receptor that directs several proteins to their correct location within the cell. Along with AP-1 complex, involved Golgi apparatus - endosome sorting. Sorting receptor for APP, regulating its intracellular trafficking and processing into amyloidogenic-beta peptides. Retains APP in the trans-Golgi network, hence preventing its transit through late endosomes where amyloid beta peptides Abeta40 and Abeta42 are generated. May also sort newly produced amyloid-beta peptides to lysosomes for catabolism. Does not affect APP trafficking from the endoplasmic reticulum to Golgi compartments. Sorting receptor for the BDNF receptor NTRK2/TRKB that facilitates NTRK2 trafficking between synaptic plasma membranes, postsynaptic densities and cell soma, hence positively regulates BDNF signaling by controlling the intracellular location of its receptor. Sorting receptor for GDNF that promotes GDNF regulated, but not constitutive secretion. Sorting receptor for the GDNF-GFRA1 complex, directing it from the cell surface to endosomes. GDNF is then targeted to lysosomes and degraded, while its receptor GFRA1 recycles back to the cell membrane, resulting in a GDNF clearance pathway. The SORL1-GFRA1 complex further targets RET for endocytosis, but not for degradation, affecting GDNF-induced neurotrophic activities. Sorting receptor for ERBB2/HER2. Regulates ERBB2 subcellular distribution by promoting its recycling after internalization from endosomes back to the plasma membrane, hence stimulating phosphoinositide 3-kinase (PI3K)-dependent ERBB2 signaling. Sorting receptor for lipoprotein lipase LPL. Promotes LPL localization to endosomes and later to the lysosomes, leading to degradation of newly synthesized LPL. Potential sorting receptor for APOA5, inducing APOA5 internalization to early endosomes, then to late endosomes, wherefrom a portion is sent to lysosomes and degradation, another portion is sorted to the trans-Golgi network. Sorting receptor for the insulin receptor INSR. Promotes recycling of internalized INSR via the Golgi apparatus back to the cell surface, thereby preventing lysosomal INSR catabolism, increasing INSR cell surface expression and strengthening insulin signal reception in adipose tissue. Does not affect INSR internalization. Plays a role in renal ion homeostasis, controlling the phospho-regulation of SLC12A1/NKCC2 by STK39/SPAK kinase and PPP3CB/calcineurin A beta phosphatase, possibly through intracellular sorting of STK39 and PPP3CB. Stimulates, via the N-terminal ectodomain, the proliferation and migration of smooth muscle cells, possibly by increasing cell surface expression of the urokinase receptor uPAR/PLAUR. This may promote extracellular matrix proteolysis and hence facilitate cell migration. By acting on the migration of intimal smooth muscle cells, may accelerate intimal thickening following vascular injury. Promotes adhesion of monocytes. Stimulates proliferation and migration of monocytes/macrophages. Through its action on intimal smooth muscle cells and macrophages, may accelerate intimal thickening and macrophage foam cell formation in the process of atherosclerosis. Regulates hypoxia-enhanced adhesion of hematopoietic stem and progenitor cells to the bone marrow stromal cells via a PLAUR-mediated pathway. This function is mediated by the N-terminal ectodomain. Metabolic regulator, which functions to maintain the adequate balance between lipid storage and oxidation in response to changing environmental conditions, such as temperature and diet. The N-terminal ectodomain negatively regulates adipose tissue energy expenditure, acting through the inhibition the BMP/Smad pathway. May regulate signaling by the heterodimeric neurotrophic cytokine CLCF1-CRLF1 bound to the CNTFR receptor by promoting the endocytosis of the tripartite complex CLCF1-CRLF1-CNTFR and lysosomal degradation. May regulate IL6 signaling, decreasing cis signaling, possibly by interfering with IL6-binding to membrane-bound IL6R, while up-regulating trans signaling via soluble IL6R. In Oryctolagus cuniculus (Rabbit), this protein is Sortilin-related receptor (SORL1).